Here is a 428-residue protein sequence, read N- to C-terminus: Lysophosphatidic acid phosphatase type 6 (428 aa).

A mitochondrion-targeting transit peptide spans 1 to 32 (MITGVFSMRLWTPVGVLTSLAYCLHQRRVALA). Residues 58-168 (RHGARSPLKP…VFIRSTNIFR (111 aa)) are substrate binding. The Nucleophile role is filled by H59. D335 (proton donor) is an active-site residue.

Belongs to the histidine acid phosphatase family. Monomer. As to expression, highly expressed in kidney, heart, small intestine, muscle, liver, prostate, testis, ovary and weakly expressed in thymus and colon.

The protein resides in the mitochondrion. The enzyme catalyses a phosphate monoester + H2O = an alcohol + phosphate. It carries out the reaction 1-(9Z-octadecenoyl)-sn-glycero-3-phosphate + H2O = 1-(9Z-octadecenoyl)-sn-glycerol + phosphate. In terms of biological role, hydrolyzes lysophosphatidic acid (LPA) containing a medium length fatty acid chain to the corresponding monoacylglycerol. Has highest activity with lysophosphatidic acid containing myristate (C14:0), monounsaturated oleate (C18:1) or palmitate (C16:0), and lower activity with C18:0 and C6:0 lysophosphatidic acid. In Homo sapiens (Human), this protein is Lysophosphatidic acid phosphatase type 6 (ACP6).